The sequence spans 631 residues: Serine/threonine-protein kinase PLK3 (631 aa).

The segment at 1–59 is disordered; sequence MEPAAGFLSPRPFPRAAVPSAPPAGPGPPANASPRSEPEVLAGPRAPDPPGRLITDPLS. Pro residues predominate over residues 20-31; the sequence is SAPPAGPGPPAN. In terms of domain architecture, Protein kinase spans 63 to 315; that stretch reads YTKGRLLGKG…IEQILRHDFF (253 aa). ATP contacts are provided by residues 69–77 and Lys-92; that span reads LGKGGFARC. Asp-186 (proton acceptor) is an active-site residue. POLO box domains follow at residues 448–526 and 547–630; these read WVSK…YMEQ and LLLQ…DQSP.

It belongs to the protein kinase superfamily. Ser/Thr protein kinase family. CDC5/Polo subfamily. Interacts (via the POLO-box domain) with CIB1; leading to inhibit PLK3 kinase activity. Interacts with GOLGB1. In terms of processing, phosphorylated in an ATM-dependent manner following DNA damage. Phosphorylated as cells enter mitosis and dephosphorylated as cells exit mitosis. Expressed in skin.

The protein resides in the cytoplasm. It is found in the nucleus. Its subcellular location is the nucleolus. It localises to the golgi apparatus. The protein localises to the cytoskeleton. The protein resides in the microtubule organizing center. It is found in the centrosome. It carries out the reaction L-seryl-[protein] + ATP = O-phospho-L-seryl-[protein] + ADP + H(+). The catalysed reaction is L-threonyl-[protein] + ATP = O-phospho-L-threonyl-[protein] + ADP + H(+). Functionally, serine/threonine-protein kinase involved in cell cycle regulation, response to stress and Golgi disassembly. Polo-like kinases act by binding and phosphorylating proteins that are already phosphorylated on a specific motif recognized by the POLO box domains. Phosphorylates ATF2, BCL2L1, CDC25A, CDC25C, CHEK2, HIF1A, JUN, p53/TP53, p73/TP73, PTEN, TOP2A and VRK1. Involved in cell cycle regulation: required for entry into S phase and cytokinesis. Phosphorylates BCL2L1, leading to regulate the G2 checkpoint and progression to cytokinesis during mitosis. Plays a key role in response to stress: rapidly activated upon stress stimulation, such as ionizing radiation, reactive oxygen species (ROS), hyperosmotic stress, UV irradiation and hypoxia. Involved in DNA damage response and G1/S transition checkpoint by phosphorylating CDC25A, p53/TP53 and p73/TP73. Phosphorylates p53/TP53 in response to reactive oxygen species (ROS), thereby promoting p53/TP53-mediated apoptosis. Phosphorylates CHEK2 in response to DNA damage, promoting the G2/M transition checkpoint. Phosphorylates the transcription factor p73/TP73 in response to DNA damage, leading to inhibit p73/TP73-mediated transcriptional activation and pro-apoptotic functions. Phosphorylates HIF1A and JUN is response to hypoxia. Phosphorylates ATF2 following hyperosmotic stress in corneal epithelium. Also involved in Golgi disassembly during the cell cycle: part of a MEK1/MAP2K1-dependent pathway that induces Golgi fragmentation during mitosis by mediating phosphorylation of VRK1. May participate in endomitotic cell cycle, a form of mitosis in which both karyokinesis and cytokinesis are interrupted and is a hallmark of megakaryocyte differentiation, via its interaction with CIB1. The sequence is that of Serine/threonine-protein kinase PLK3 (Plk3) from Mus musculus (Mouse).